Here is a 113-residue protein sequence, read N- to C-terminus: Putative membrane protein insertion efficiency factor (113 aa).

This sequence belongs to the UPF0161 family.

It is found in the cell inner membrane. Its function is as follows. Could be involved in insertion of integral membrane proteins into the membrane. The polypeptide is Putative membrane protein insertion efficiency factor (Campylobacter concisus (strain 13826)).